The sequence spans 159 residues: Ribosomal RNA large subunit methyltransferase H (159 aa).

2 residues coordinate S-adenosyl-L-methionine: leucine 76 and glycine 108.

It belongs to the RNA methyltransferase RlmH family. Homodimer.

The protein localises to the cytoplasm. It carries out the reaction pseudouridine(1915) in 23S rRNA + S-adenosyl-L-methionine = N(3)-methylpseudouridine(1915) in 23S rRNA + S-adenosyl-L-homocysteine + H(+). Functionally, specifically methylates the pseudouridine at position 1915 (m3Psi1915) in 23S rRNA. This chain is Ribosomal RNA large subunit methyltransferase H, found in Limosilactobacillus fermentum (strain NBRC 3956 / LMG 18251) (Lactobacillus fermentum).